Here is a 105-residue protein sequence, read N- to C-terminus: Large ribosomal subunit protein eL36 (105 aa).

K62 carries the N6-acetyllysine modification.

It belongs to the eukaryotic ribosomal protein eL36 family. In terms of assembly, component of the large ribosomal subunit.

The protein resides in the cytoplasm. It is found in the cytosol. Functionally, component of the large ribosomal subunit. The ribosome is a large ribonucleoprotein complex responsible for the synthesis of proteins in the cell. This is Large ribosomal subunit protein eL36 (RPL36) from Homo sapiens (Human).